Here is a 447-residue protein sequence, read N- to C-terminus: Drebrin-like protein A (447 aa).

The ADF-H domain occupies Ser2 to Ala133. Disordered stretches follow at residues Asn141–Val160 and Lys184–Gln368. Residues Ala180–Thr245 are a coiled coil. The segment covering Lys184 to Lys242 has biased composition (basic and acidic residues). The segment covering Val246 to Pro255 has biased composition (polar residues). The segment covering Pro319–His328 has biased composition (pro residues). Residues Gln345–Thr365 show a composition bias toward acidic residues. The region spanning Glu388–Glu447 is the SH3 domain.

Belongs to the ABP1 family.

It is found in the cytoplasm. The protein localises to the cytoskeleton. The protein resides in the cell projection. It localises to the lamellipodium. Its subcellular location is the ruffle. It is found in the cell cortex. The protein localises to the cytosol. The protein resides in the synapse. It localises to the perikaryon. Its subcellular location is the neuron projection. It is found in the cell membrane. The protein localises to the cytoplasmic vesicle. The protein resides in the clathrin-coated vesicle membrane. It localises to the golgi apparatus membrane. Its subcellular location is the podosome. It is found in the early endosome. The protein localises to the dendrite. The protein resides in the postsynaptic density. Functionally, adapter protein that binds F-actin and dynamin, and thereby plays a role in receptor-mediated endocytosis. Plays a role in the reorganization of the actin cytoskeleton, formation of cell projections, such as neurites, in neuron morphogenesis and synapse formation. Does not bind G-actin and promote actin polymerization by itself, but excerts its functions by interaction with other proteins. Required for the formation of organized podosome rosettes. This chain is Drebrin-like protein A (dbnl-a), found in Xenopus laevis (African clawed frog).